The following is a 147-amino-acid chain: Small ribosomal subunit protein uS13 (147 aa).

Residues 115-147 (SYKGRRHEAGLPVRGQRTKSTFRNSSSVGVKRS) form a disordered region. Polar residues predominate over residues 132-147 (TKSTFRNSSSVGVKRS).

The protein belongs to the universal ribosomal protein uS13 family. In terms of assembly, part of the 30S ribosomal subunit. Forms a loose heterodimer with protein S19. Forms two bridges to the 50S subunit in the 70S ribosome.

Located at the top of the head of the 30S subunit, it contacts several helices of the 16S rRNA. In the 70S ribosome it contacts the 23S rRNA (bridge B1a) and protein L5 of the 50S subunit (bridge B1b), connecting the 2 subunits; these bridges are implicated in subunit movement. The polypeptide is Small ribosomal subunit protein uS13 (Methanobrevibacter smithii (strain ATCC 35061 / DSM 861 / OCM 144 / PS)).